The following is a 283-amino-acid chain: Putative 4-diphosphocytidyl-2-C-methyl-D-erythritol kinase (283 aa).

The active site involves Lys11. 95 to 105 provides a ligand contact to ATP; sequence PVCAGMGGGSS. Asp137 is a catalytic residue.

It belongs to the GHMP kinase family. IspE subfamily.

It carries out the reaction 4-CDP-2-C-methyl-D-erythritol + ATP = 4-CDP-2-C-methyl-D-erythritol 2-phosphate + ADP + H(+). Its function is as follows. Catalyzes the phosphorylation of the position 2 hydroxy group of 4-diphosphocytidyl-2C-methyl-D-erythritol. This chain is Putative 4-diphosphocytidyl-2-C-methyl-D-erythritol kinase, found in Streptococcus equi subsp. equi (strain 4047).